The primary structure comprises 578 residues: MTAIANACLSCLSAVDRWCHITACLGPIGGRSRDGIYETTLADNEREAVSDLLGYLENRAETDFFSGEPLRALSTLVYSDNVDLQRSASLTFAEITERDVREVDRDTLEPILFLLQSSDIEVQRAASAALGNLAVNAENKVLIVALGGLTPLIRQMMSPNVEVQCNAVGCITNLATHEDNKAKIARSGALGPLIRLAKSKDMRVQRNATGALLNMTHSDDNRQQLVNAGAIPVLVQLLSSPDVDVQYYCTTALSNIAVDASNRKRLAQTESRLVQSLVHLMDSSTPKVQCQAALALRNLASDEKYQLEIVRAKGLPPLLRLLQSSYLPLILSAVACIRNISIHPLNESPIIDAGFLKPLVDLLGSTDNEEIQCHAISTLRNLAASSDRNKELVLQAGAVQKCKDLVLRVPLSVQSEMTAAIAVLALSDELKPHLLNLGVFDVLIPLTNSESIEVQGNSAAALGNLSSKVGDYSIFVRDWADPNGGIHGYLKRFLASGDPTFQHIAIWTLLQLLESEDKRLIGYISKSDDIVQMVKTISDKNIESDEEDGEDGEAEVIALARRCLGLLGNGPKQTLVEG.

9 ARM repeats span residues 58-95 (NRAETDFFSGEPLRALSTLVYSDNVDLQRSASLTFAEI), 96-135 (TERDVREVDRDTLEPILFLLQSSDIEVQRAASAALGNLAV), 137-176 (AENKVLIVALGGLTPLIRQMMSPNVEVQCNAVGCITNLAT), 178-217 (EDNKAKIARSGALGPLIRLAKSKDMRVQRNATGALLNMTH), 219-258 (DDNRQQLVNAGAIPVLVQLLSSPDVDVQYYCTTALSNIAV), 262-301 (NRKRLAQTESRLVQSLVHLMDSSTPKVQCQAALALRNLAS), 303-342 (EKYQLEIVRAKGLPPLLRLLQSSYLPLILSAVACIRNISI), 344-384 (PLNE…NLAA), and 428-467 (DELKPHLLNLGVFDVLIPLTNSESIEVQGNSAAALGNLSS).

It belongs to the beta-catenin family.

The protein resides in the vacuole membrane. In terms of biological role, functions in both vacuole inheritance and protein targeting from the cytoplasm to vacuole. This chain is Vacuolar protein 8 (vac8), found in Aspergillus fumigatus (strain ATCC MYA-4609 / CBS 101355 / FGSC A1100 / Af293) (Neosartorya fumigata).